A 417-amino-acid polypeptide reads, in one-letter code: Multifunctional CCA protein (417 aa).

ATP contacts are provided by Gly8 and Arg11. Residues Gly8 and Arg11 each contribute to the CTP site. Residues Asp21 and Asp23 each coordinate Mg(2+). Positions 91, 137, and 140 each coordinate ATP. CTP contacts are provided by Arg91, Arg137, and Arg140. Positions 225-326 constitute an HD domain; the sequence is SGIHTLMTLQ…LNVLKKTDAF (102 aa).

Belongs to the tRNA nucleotidyltransferase/poly(A) polymerase family. Bacterial CCA-adding enzyme type 1 subfamily. Monomer. Can also form homodimers and oligomers. Mg(2+) is required as a cofactor. Ni(2+) serves as cofactor.

The enzyme catalyses a tRNA precursor + 2 CTP + ATP = a tRNA with a 3' CCA end + 3 diphosphate. The catalysed reaction is a tRNA with a 3' CCA end + 2 CTP + ATP = a tRNA with a 3' CCACCA end + 3 diphosphate. Its function is as follows. Catalyzes the addition and repair of the essential 3'-terminal CCA sequence in tRNAs without using a nucleic acid template. Adds these three nucleotides in the order of C, C, and A to the tRNA nucleotide-73, using CTP and ATP as substrates and producing inorganic pyrophosphate. tRNA 3'-terminal CCA addition is required both for tRNA processing and repair. Also involved in tRNA surveillance by mediating tandem CCA addition to generate a CCACCA at the 3' terminus of unstable tRNAs. While stable tRNAs receive only 3'-terminal CCA, unstable tRNAs are marked with CCACCA and rapidly degraded. The sequence is that of Multifunctional CCA protein from Neisseria meningitidis serogroup B (strain ATCC BAA-335 / MC58).